Consider the following 320-residue polypeptide: Pyrroline-5-carboxylate reductase (320 aa).

Belongs to the pyrroline-5-carboxylate reductase family.

The catalysed reaction is L-proline + NADP(+) = (S)-1-pyrroline-5-carboxylate + NADPH + 2 H(+). The enzyme catalyses L-proline + NAD(+) = (S)-1-pyrroline-5-carboxylate + NADH + 2 H(+). The protein operates within amino-acid biosynthesis; L-proline biosynthesis; L-proline from L-glutamate 5-semialdehyde: step 1/1. The chain is Pyrroline-5-carboxylate reductase (P5CR) from Lophium arboricola (Zalerion arboricola).